Here is a 74-residue protein sequence, read N- to C-terminus: UPF0435 protein GWCH70_0415 (74 aa).

This sequence belongs to the UPF0435 family.

This Geobacillus sp. (strain WCH70) protein is UPF0435 protein GWCH70_0415.